A 483-amino-acid polypeptide reads, in one-letter code: Cobyric acid synthase (483 aa).

The 188-residue stretch at 251–438 folds into the GATase cobBQ-type domain; that stretch reads SLVVAVPMLP…LHGVFNADEF (188 aa). Cysteine 333 serves as the catalytic Nucleophile. Histidine 430 is a catalytic residue.

This sequence belongs to the CobB/CobQ family. CobQ subfamily.

Its pathway is cofactor biosynthesis; adenosylcobalamin biosynthesis. In terms of biological role, catalyzes amidations at positions B, D, E, and G on adenosylcobyrinic A,C-diamide. NH(2) groups are provided by glutamine, and one molecule of ATP is hydrogenolyzed for each amidation. The sequence is that of Cobyric acid synthase from Brucella anthropi (strain ATCC 49188 / DSM 6882 / CCUG 24695 / JCM 21032 / LMG 3331 / NBRC 15819 / NCTC 12168 / Alc 37) (Ochrobactrum anthropi).